The chain runs to 646 residues: Type I inositol polyphosphate 5-phosphatase 2 (646 aa).

Residues 59 to 74 (TDEDSHNGRRGSEADH) are compositionally biased toward basic and acidic residues. Disordered stretches follow at residues 59–99 (TDED…GKSE), 185–207 (ESVYDQSPSCNNNALHRSHSAPS), and 329–369 (IDNR…IRNS). Positions 188–207 (YDQSPSCNNNALHRSHSAPS) are enriched in polar residues. Over residues 341-350 (EAAKIMHDDS) the composition is skewed to basic and acidic residues. Catalytic regions lie at residues 495–510 (DQVFWFGDLNYRLNMS) and 575–590 (KKRAPAWCDRILWLGK).

The protein belongs to the inositol polyphosphate 5-phosphatase family. As to expression, expressed ubiquitously.

It carries out the reaction 1D-myo-inositol 1,4,5-trisphosphate + H2O = 1D-myo-inositol 1,4-bisphosphate + phosphate. The enzyme catalyses 1D-myo-inositol 1,3,4,5-tetrakisphosphate + H2O = 1D-myo-inositol 1,3,4-trisphosphate + phosphate. In terms of biological role, has phosphatase activity toward Ins(1,4,5)P3 and Ins(1,3,4,5)P4. Seems to be involved in the abscisic acid (ABA) signaling pathway. Could also be able to hydrolyze PtdIns(4,5)P2 and PtdIns(3,4,5)P3. This is Type I inositol polyphosphate 5-phosphatase 2 from Arabidopsis thaliana (Mouse-ear cress).